The chain runs to 49 residues: Large ribosomal subunit protein bL33B (49 aa).

It belongs to the bacterial ribosomal protein bL33 family.

This is Large ribosomal subunit protein bL33B (rpmG2) from Lactococcus lactis subsp. lactis (strain IL1403) (Streptococcus lactis).